A 253-amino-acid polypeptide reads, in one-letter code: 5-oxoprolinase subunit A (253 aa).

Belongs to the LamB/PxpA family. In terms of assembly, forms a complex composed of PxpA, PxpB and PxpC.

The catalysed reaction is 5-oxo-L-proline + ATP + 2 H2O = L-glutamate + ADP + phosphate + H(+). Functionally, catalyzes the cleavage of 5-oxoproline to form L-glutamate coupled to the hydrolysis of ATP to ADP and inorganic phosphate. This is 5-oxoprolinase subunit A from Bacillus anthracis (strain CDC 684 / NRRL 3495).